The chain runs to 310 residues: Nucleotide-binding protein BAD_0837 (310 aa).

Position 31 to 38 (Gly-31 to Ser-38) interacts with ATP. Asp-82–Ser-85 serves as a coordination point for GTP.

It belongs to the RapZ-like family.

Its function is as follows. Displays ATPase and GTPase activities. This chain is Nucleotide-binding protein BAD_0837, found in Bifidobacterium adolescentis (strain ATCC 15703 / DSM 20083 / NCTC 11814 / E194a).